Reading from the N-terminus, the 1358-residue chain is Phosphoribosylformylglycinamidine synthase (1358 aa).

The residue at position 2 (Thr2) is an N-acetylthreonine. The segment at 339–363 is disordered; that stretch reads AVSPFPGAATGSGGEIRDEGATGRG. ATP is bound by residues 345 to 356, 424 to 426, and Ala719; these read GAATGSGGEIRD and NGY. Asp720, Glu762, Asn766, and Asp930 together coordinate Mg(2+). Ser932 is a binding site for ATP. The region spanning 1093 to 1358 is the Glutamine amidotransferase type-1 domain; the sequence is VAILREQGVN…LFRSARRWVG (266 aa). Catalysis depends on Cys1187, which acts as the Nucleophile. Active-site residues include His1319 and Glu1321.

This sequence in the N-terminal section; belongs to the FGAMS family.

It is found in the cytoplasm. The catalysed reaction is N(2)-formyl-N(1)-(5-phospho-beta-D-ribosyl)glycinamide + L-glutamine + ATP + H2O = 2-formamido-N(1)-(5-O-phospho-beta-D-ribosyl)acetamidine + L-glutamate + ADP + phosphate + H(+). The protein operates within purine metabolism; IMP biosynthesis via de novo pathway; 5-amino-1-(5-phospho-D-ribosyl)imidazole from N(2)-formyl-N(1)-(5-phospho-D-ribosyl)glycinamide: step 1/2. Its function is as follows. Phosphoribosylformylglycinamidine synthase involved in the purines biosynthetic pathway. Catalyzes the ATP-dependent conversion of formylglycinamide ribonucleotide (FGAR) and glutamine to yield formylglycinamidine ribonucleotide (FGAM) and glutamate. This Saccharomyces cerevisiae (strain ATCC 204508 / S288c) (Baker's yeast) protein is Phosphoribosylformylglycinamidine synthase (ADE6).